Here is a 271-residue protein sequence, read N- to C-terminus: DNA-directed RNA polymerase subunit Rpo3 (271 aa).

It belongs to the archaeal Rpo3/eukaryotic RPB3 RNA polymerase subunit family. Part of the RNA polymerase complex.

The protein localises to the cytoplasm. The catalysed reaction is RNA(n) + a ribonucleoside 5'-triphosphate = RNA(n+1) + diphosphate. DNA-dependent RNA polymerase (RNAP) catalyzes the transcription of DNA into RNA using the four ribonucleoside triphosphates as substrates. The sequence is that of DNA-directed RNA polymerase subunit Rpo3 from Thermoplasma volcanium (strain ATCC 51530 / DSM 4299 / JCM 9571 / NBRC 15438 / GSS1).